The chain runs to 597 residues: Gigaxonin (597 aa).

The BTB domain maps to 30-99 (CDAHLVLDGE…IFSGQIRLNE (70 aa)). One can recognise a BACK domain in the interval 134-236 (CIGIRDFALH…DSSYLREQML (103 aa)). Kelch repeat units follow at residues 274–326 (CIVT…SAEG), 327–374 (FLFV…EIDG), 376–421 (LYIL…AMKK), 422–468 (KIYA…GVAM), 470–522 (LYVF…VYGA), and 528–574 (SIYV…AALR).

As to quaternary structure, interacts with TBCB. Interacts with CUL3. Part of a complex that contains CUL3, RBX1 and GAN. Interacts (via BTB domain) with UBA1. Interacts (via Kelch domains) with MAP1B (via C-terminus) and MAP1S (via C-terminus). Ubiquitinated by E3 ubiquitin ligase complex formed by CUL3 and RBX1 and probably targeted for proteasome-independent degradation. In terms of tissue distribution, expressed in brain, heart and muscle (at protein level).

Its subcellular location is the cytoplasm. It is found in the cytoskeleton. The protein operates within protein modification; protein ubiquitination. In terms of biological role, probable cytoskeletal component that directly or indirectly plays an important role in neurofilament architecture. May act as a substrate-specific adapter of an E3 ubiquitin-protein ligase complex which mediates the ubiquitination and subsequent proteasomal degradation of target proteins. Controls degradation of TBCB. Controls degradation of MAP1B and MAP1S, and is critical for neuronal maintenance and survival. This Mus musculus (Mouse) protein is Gigaxonin.